The chain runs to 340 residues: HTH-type transcriptional regulator PtxS (340 aa).

An HTH lacI-type domain is found at valine 12–arginine 67. A DNA-binding region (H-T-H motif) is located at residues isoleucine 14–glycine 33.

As to quaternary structure, homodimer.

With respect to regulation, 2-ketogluconate acts as a molecular effector and causes dissociation of PtxS from its target promoter. Glucose negatively affects the molecular binding of PtxS and 2KGA, and gluconic acid inhibits the PtxS-2KGA binding reaction. Functionally, involved in the regulation of 2-ketogluconic acid metabolism via the control of the expression of the kgu operon. Binds directly to a 14-bp palindrome sequence via its conserved HTH motif. This is HTH-type transcriptional regulator PtxS from Pseudomonas plecoglossicida.